Consider the following 238-residue polypeptide: Small ribosomal subunit protein eS4 (238 aa).

The S4 RNA-binding domain occupies 38 to 101 (LPLALIIRDV…GEVYRVVPDA (64 aa)).

This sequence belongs to the eukaryotic ribosomal protein eS4 family.

This Pyrobaculum aerophilum (strain ATCC 51768 / DSM 7523 / JCM 9630 / CIP 104966 / NBRC 100827 / IM2) protein is Small ribosomal subunit protein eS4.